Consider the following 99-residue polypeptide: DNA-binding protein HU (99 aa).

This sequence belongs to the bacterial histone-like protein family. Homodimer.

Histone-like DNA-binding protein which is capable of wrapping DNA to stabilize it, and thus to prevent its denaturation under extreme environmental conditions. The sequence is that of DNA-binding protein HU (hup) from Rickettsia typhi (strain ATCC VR-144 / Wilmington).